Reading from the N-terminus, the 236-residue chain is NAD-dependent protein deacetylase (236 aa).

Positions 1–236 (MIKDWLQESN…EFLRSISNEG (236 aa)) constitute a Deacetylase sirtuin-type domain. 8 residues coordinate NAD(+): Ala-18, Thr-22, Phe-29, Arg-30, Gln-96, Val-98, Asp-99, and His-114. Phe-29 provides a ligand contact to nicotinamide. Positions 98 and 99 each coordinate nicotinamide. Residue His-114 is the Proton acceptor of the active site. Residues Cys-122, Cys-125, Cys-141, and Cys-143 each coordinate Zn(2+). 4 residues coordinate NAD(+): Ser-181, Ser-182, Asn-206, and Ile-225.

The protein belongs to the sirtuin family. Class U subfamily. The cofactor is Zn(2+).

It is found in the cytoplasm. The catalysed reaction is N(6)-acetyl-L-lysyl-[protein] + NAD(+) + H2O = 2''-O-acetyl-ADP-D-ribose + nicotinamide + L-lysyl-[protein]. In terms of biological role, NAD-dependent protein deacetylase which modulates the activities of several enzymes which are inactive in their acetylated form. In Oceanobacillus iheyensis (strain DSM 14371 / CIP 107618 / JCM 11309 / KCTC 3954 / HTE831), this protein is NAD-dependent protein deacetylase.